A 283-amino-acid chain; its full sequence is Malonyl-[acyl-carrier protein] O-methyltransferase (283 aa).

Belongs to the methyltransferase superfamily.

It catalyses the reaction malonyl-[ACP] + S-adenosyl-L-methionine = malonyl-[ACP] methyl ester + S-adenosyl-L-homocysteine. It participates in cofactor biosynthesis; biotin biosynthesis. Its function is as follows. Converts the free carboxyl group of a malonyl-thioester to its methyl ester by transfer of a methyl group from S-adenosyl-L-methionine (SAM). It allows to synthesize pimeloyl-ACP via the fatty acid synthetic pathway. This chain is Malonyl-[acyl-carrier protein] O-methyltransferase, found in Acetivibrio thermocellus (strain ATCC 27405 / DSM 1237 / JCM 9322 / NBRC 103400 / NCIMB 10682 / NRRL B-4536 / VPI 7372) (Clostridium thermocellum).